The following is a 247-amino-acid chain: MNVIPCSIKTLKGLYDISGVEVGQHLYWQIGGLQIHAQVLITSWVVIAILLGSVIIAVRNPQTIPTNGQNFFEYVLEFIQDLSKTQIGEEYGPWVPFIGTMFLFIFVSNWSGALLPWKIIKLPHGELAAPTNDINTTVALALPTSVAYFYAGLRKKGLGYFGKYIQPTPILLPINILEDFTKPLSLSFRLFGNILADELVVVVLVSLVPSVVPIPVMFLGLFTSGIQALIFATLAAAYIGESMEGHH.

The next 5 membrane-spanning stretches (helical) occupy residues 38–58 (QVLI…IIAV), 95–115 (VPFI…GALL), 133–153 (DINT…YAGL), 199–219 (LVVV…VMFL), and 220–240 (GLFT…AYIG).

It belongs to the ATPase A chain family. As to quaternary structure, F-type ATPases have 2 components, CF(1) - the catalytic core - and CF(0) - the membrane proton channel. CF(1) has five subunits: alpha(3), beta(3), gamma(1), delta(1), epsilon(1). CF(0) has four main subunits: a, b, b' and c.

Its subcellular location is the plastid. The protein localises to the chloroplast thylakoid membrane. In terms of biological role, key component of the proton channel; it plays a direct role in the translocation of protons across the membrane. In Phalaenopsis aphrodite subsp. formosana (Moth orchid), this protein is ATP synthase subunit a, chloroplastic.